The sequence spans 116 residues: UPF0102 protein PERMA_0362 (116 aa).

It belongs to the UPF0102 family.

In Persephonella marina (strain DSM 14350 / EX-H1), this protein is UPF0102 protein PERMA_0362.